We begin with the raw amino-acid sequence, 416 residues long: MSTDAEDVSNDRRKYEFRKVIEELREYEGSGTQLVTIYIPPDRQVSDVVAHITQEHSEASNIKSKQTRTNVQDALTSIKDRLRYYDTYPPDNGIVLFSGAVSTGGGQTTMVTRSLESPPEPVQSFRYHCDSDFLTDPLEDMLADKGLFGLIVLDRREANVGWLKGKRVEPVKSASSLVPGKQRKGGQSAQRFARLRLEAIDNFYQEVAGMANDLFVPKRHEIDGVLVGGPSPTKDEFLDGDYLHHELGDVVVGKFDVSYTDESGLHDLVDSAQDVLADQEVMKDKAEMEEFFEKLHGGEEATYGFEPTRKNLMMGAVDRLLLSEDLRSDVVVYECPDGHEEYEVIDRRHDDPEHTCSDCGSASEKTEREDVIEYLMSIAEQRGTETKFISTDFEKGEQLHNAFGGIAGILRYATGI.

The protein belongs to the eukaryotic release factor 1 family. In terms of assembly, heterodimer of two subunits, one of which binds GTP.

It is found in the cytoplasm. In terms of biological role, directs the termination of nascent peptide synthesis (translation) in response to the termination codons UAA, UAG and UGA. The sequence is that of Peptide chain release factor subunit 1 from Haloquadratum walsbyi (strain DSM 16790 / HBSQ001).